Reading from the N-terminus, the 466-residue chain is mRNA-capping enzyme subunit alpha (466 aa).

Lysine 67 acts as the N6-GMP-lysine intermediate in catalysis. The tract at residues 408 to 466 is disordered; it reads REQGLKNAQKQFNHQASARSSLSQQHSTEPEQSQDQPKYVDDDDDNWSDDEPDTKRQKI. A compositionally biased stretch (polar residues) spans 413–443; the sequence is KNAQKQFNHQASARSSLSQQHSTEPEQSQDQ. A compositionally biased stretch (acidic residues) spans 448 to 459; the sequence is DDDDDNWSDDEP.

The protein belongs to the eukaryotic GTase family. Heterodimer. The mRNA-capping enzyme is composed of two separate chains alpha and beta, respectively a mRNA guanylyltransferase and an mRNA 5'-triphosphate monophosphatase.

The protein localises to the nucleus. The catalysed reaction is a 5'-end diphospho-ribonucleoside in mRNA + GTP + H(+) = a 5'-end (5'-triphosphoguanosine)-ribonucleoside in mRNA + diphosphate. Second step of mRNA capping. Transfer of the GMP moiety of GTP to the 5'-end of RNA via an enzyme-GMP covalent reaction intermediate. The polypeptide is mRNA-capping enzyme subunit alpha (CEG1) (Kluyveromyces lactis (strain ATCC 8585 / CBS 2359 / DSM 70799 / NBRC 1267 / NRRL Y-1140 / WM37) (Yeast)).